Consider the following 217-residue polypeptide: Probable transaldolase (217 aa).

The active-site Schiff-base intermediate with substrate is K84.

It belongs to the transaldolase family. Type 3B subfamily.

The protein resides in the cytoplasm. It catalyses the reaction D-sedoheptulose 7-phosphate + D-glyceraldehyde 3-phosphate = D-erythrose 4-phosphate + beta-D-fructose 6-phosphate. Its pathway is carbohydrate degradation; pentose phosphate pathway; D-glyceraldehyde 3-phosphate and beta-D-fructose 6-phosphate from D-ribose 5-phosphate and D-xylulose 5-phosphate (non-oxidative stage): step 2/3. Its function is as follows. Transaldolase is important for the balance of metabolites in the pentose-phosphate pathway. The polypeptide is Probable transaldolase (Roseiflexus sp. (strain RS-1)).